Consider the following 337-residue polypeptide: Protein-arginine kinase (337 aa).

The region spanning 8–239 (VVLSSRIRLA…KQIISSERRA (232 aa)) is the Phosphagen kinase C-terminal domain. ATP is bound by residues 11 to 15 (SSRIR), His76, Arg110, 161 to 165 (RASVM), and 192 to 197 (RGIYGE). The RDXXRA motif of the pArg binding pocket involved in allosteric regulation signature appears at 321-326 (RDVKRA).

Belongs to the ATP:guanido phosphotransferase family.

It carries out the reaction L-arginyl-[protein] + ATP = N(omega)-phospho-L-arginyl-[protein] + ADP + H(+). Its activity is regulated as follows. Appears to be allosterically activated by the binding of pArg-containing polypeptides to the pArg-binding pocket localized in the C-terminal domain of McsB. Catalyzes the specific phosphorylation of arginine residues in proteins. This Caldanaerobacter subterraneus subsp. tengcongensis (strain DSM 15242 / JCM 11007 / NBRC 100824 / MB4) (Thermoanaerobacter tengcongensis) protein is Protein-arginine kinase.